Here is a 442-residue protein sequence, read N- to C-terminus: UDP-N-acetylmuramoylalanine--D-glutamate ligase (442 aa).

An ATP-binding site is contributed by 113-119 (GSNGKTT).

This sequence belongs to the MurCDEF family.

It is found in the cytoplasm. The enzyme catalyses UDP-N-acetyl-alpha-D-muramoyl-L-alanine + D-glutamate + ATP = UDP-N-acetyl-alpha-D-muramoyl-L-alanyl-D-glutamate + ADP + phosphate + H(+). It participates in cell wall biogenesis; peptidoglycan biosynthesis. Its function is as follows. Cell wall formation. Catalyzes the addition of glutamate to the nucleotide precursor UDP-N-acetylmuramoyl-L-alanine (UMA). The protein is UDP-N-acetylmuramoylalanine--D-glutamate ligase of Coxiella burnetii (strain Dugway 5J108-111).